A 1060-amino-acid chain; its full sequence is Probable serine/threonine-protein kinase MARK-A (1060 aa).

Basic and acidic residues-rich tracts occupy residues 1–11 (METLKEEEQFR) and 23–37 (HLKE…EREQ). Disordered stretches follow at residues 1-52 (METL…LQLQ) and 67-88 (NKIP…SISV). Composition is skewed to low complexity over residues 38–52 (QQQQ…LQLQ) and 68–88 (KIPS…SISV). The Protein kinase domain maps to 109–361 (YLVIKTIGRG…MEEIINHPWL (253 aa)). ATP is bound by residues 115 to 123 (IGRGQFGKV) and K139. The active-site Proton acceptor is the D232. A compositionally biased stretch (low complexity) spans 409 to 475 (INNINNTMAT…TTTTNATTTT (67 aa)). Disordered stretches follow at residues 409-488 (INNI…NNEE), 560-701 (GENS…SPLC), 714-886 (LREK…PVHS), and 899-966 (DDKS…QEPR). The UBA domain maps to 488-528 (ELDQEIIEELVGLGFEREELCNSIRQNKYNDAASTYFLLQG). Residues 577–594 (TVDSPKSTNTPQYRSSNT) are compositionally biased toward polar residues. Composition is skewed to low complexity over residues 603 to 613 (QQQQQQQQQQQ), 620 to 637 (QQQN…NNHN), 650 to 699 (STTV…NPSP), and 720 to 760 (TTTN…TSPN). Positions 761–770 (LQPFSLASTA) are enriched in polar residues. Composition is skewed to low complexity over residues 771–799 (NNNN…SLNS) and 811–831 (QQQQ…NSSS). A compositionally biased stretch (basic and acidic residues) spans 837-846 (QRQESRKLED). Composition is skewed to low complexity over residues 904–926 (NSSS…TNNT) and 935–965 (QNSN…QQEP). Residues 1008-1057 (IECETEGVRFSIEICRLPRLSVNGLKFKRIGGSSWRYKSICKDLLSQMKL) enclose the KA1 domain.

This sequence belongs to the protein kinase superfamily. CAMK Ser/Thr protein kinase family. SNF1 subfamily.

The enzyme catalyses L-seryl-[protein] + ATP = O-phospho-L-seryl-[protein] + ADP + H(+). It carries out the reaction L-threonyl-[protein] + ATP = O-phospho-L-threonyl-[protein] + ADP + H(+). This is Probable serine/threonine-protein kinase MARK-A (mrkA) from Dictyostelium discoideum (Social amoeba).